The following is a 241-amino-acid chain: Sensory transduction protein LytT (241 aa).

The Response regulatory domain occupies 3–117 (RVLIVDDEML…RIQQTLKKYK (115 aa)). At Asp-54 the chain carries 4-aspartylphosphate. One can recognise an HTH LytTR-type domain in the interval 137–241 (LALSVGESIV…AKELKKLLHI (105 aa)).

Post-translationally, phosphorylated by LytS.

The protein resides in the cytoplasm. Its function is as follows. Member of the two-component regulatory system LytS/LytT that probably regulates genes involved in cell wall metabolism. This Bacillus subtilis (strain 168) protein is Sensory transduction protein LytT (lytT).